The following is a 766-amino-acid chain: 5-methyltetrahydropteroyltriglutamate--homocysteine methyltransferase (766 aa).

5-methyltetrahydropteroyltri-L-glutamate is bound by residues 16–19 (RELK) and Lys119. Residues 440–442 (IGS) and Glu493 contribute to the L-homocysteine site. L-methionine is bound by residues 440-442 (IGS) and Glu493. Residues 524–525 (RC) and Trp570 contribute to the 5-methyltetrahydropteroyltri-L-glutamate site. Asp608 serves as a coordination point for L-homocysteine. Position 608 (Asp608) interacts with L-methionine. Position 614 (Glu614) interacts with 5-methyltetrahydropteroyltri-L-glutamate. The Zn(2+) site is built by His650, Cys652, and Glu674. The Proton donor role is filled by His703. Cys735 provides a ligand contact to Zn(2+).

It belongs to the vitamin-B12 independent methionine synthase family. Zn(2+) serves as cofactor.

The catalysed reaction is 5-methyltetrahydropteroyltri-L-glutamate + L-homocysteine = tetrahydropteroyltri-L-glutamate + L-methionine. Its pathway is amino-acid biosynthesis; L-methionine biosynthesis via de novo pathway; L-methionine from L-homocysteine (MetE route): step 1/1. Catalyzes the transfer of a methyl group from 5-methyltetrahydrofolate to homocysteine resulting in methionine formation. The polypeptide is 5-methyltetrahydropteroyltriglutamate--homocysteine methyltransferase (Pseudomonas aeruginosa (strain ATCC 15692 / DSM 22644 / CIP 104116 / JCM 14847 / LMG 12228 / 1C / PRS 101 / PAO1)).